The chain runs to 351 residues: Nicotinate-nucleotide--dimethylbenzimidazole phosphoribosyltransferase (351 aa).

Glu317 serves as the catalytic Proton acceptor.

This sequence belongs to the CobT family.

It catalyses the reaction 5,6-dimethylbenzimidazole + nicotinate beta-D-ribonucleotide = alpha-ribazole 5'-phosphate + nicotinate + H(+). It functions in the pathway nucleoside biosynthesis; alpha-ribazole biosynthesis; alpha-ribazole from 5,6-dimethylbenzimidazole: step 1/2. Its function is as follows. Catalyzes the synthesis of alpha-ribazole-5'-phosphate from nicotinate mononucleotide (NAMN) and 5,6-dimethylbenzimidazole (DMB). The polypeptide is Nicotinate-nucleotide--dimethylbenzimidazole phosphoribosyltransferase (Pseudomonas fluorescens (strain ATCC BAA-477 / NRRL B-23932 / Pf-5)).